The following is a 244-amino-acid chain: ATP synthase subunit a, chloroplastic (244 aa).

The next 5 helical transmembrane spans lie at 35-55 (QVLI…AIAV), 92-112 (VPFI…GALL), 131-151 (INTT…AGIT), 196-216 (LVVV…VMFL), and 217-237 (GLFT…AYIG).

This sequence belongs to the ATPase A chain family. F-type ATPases have 2 components, CF(1) - the catalytic core - and CF(0) - the membrane proton channel. CF(1) has five subunits: alpha(3), beta(3), gamma(1), delta(1), epsilon(1). CF(0) has four main subunits: a, b, b' and c.

The protein localises to the plastid. Its subcellular location is the chloroplast thylakoid membrane. Key component of the proton channel; it plays a direct role in the translocation of protons across the membrane. The protein is ATP synthase subunit a, chloroplastic of Coffea arabica (Arabian coffee).